A 157-amino-acid chain; its full sequence is Ribonuclease H (157 aa).

The 144-residue stretch at 2–145 folds into the RNase H type-1 domain; it reads NAEISKIYTD…CDAIARAFAA (144 aa). Mg(2+) is bound by residues Asp-11, Glu-50, Asp-74, and Asp-137.

It belongs to the RNase H family. Monomer. Mg(2+) serves as cofactor.

It localises to the cytoplasm. It carries out the reaction Endonucleolytic cleavage to 5'-phosphomonoester.. In terms of biological role, endonuclease that specifically degrades the RNA of RNA-DNA hybrids. The sequence is that of Ribonuclease H from Cyanothece sp. (strain PCC 7425 / ATCC 29141).